A 105-amino-acid chain; its full sequence is Nucleoid-associated protein Ccur92_18190 (105 aa).

Belongs to the YbaB/EbfC family. In terms of assembly, homodimer.

It localises to the cytoplasm. Its subcellular location is the nucleoid. In terms of biological role, binds to DNA and alters its conformation. May be involved in regulation of gene expression, nucleoid organization and DNA protection. The protein is Nucleoid-associated protein Ccur92_18190 of Campylobacter curvus (strain 525.92).